Reading from the N-terminus, the 48-residue chain is M-oxotoxin-Ot1c (48 aa).

It localises to the secreted. The protein localises to the target cell membrane. Disrupts cell membranes, particularly those rich in phosphocholine, through formation of pores. Has antimicrobial activity, hemolytic activity and insecticidal activity. This Oxyopes takobius (Lynx spider) protein is M-oxotoxin-Ot1c.